The following is a 386-amino-acid chain: Succinate--CoA ligase [ADP-forming] subunit beta (386 aa).

Residues 9–244 enclose the ATP-grasp domain; that stretch reads KAILRSYGVS…LDEEDPKEIE (236 aa). ATP contacts are provided by residues Lys46, 53-55, Glu99, Cys102, and Glu107; that span reads GRG. Asn199 and Asp213 together coordinate Mg(2+). Substrate-binding positions include Asn264 and 321–323; that span reads GIM.

This sequence belongs to the succinate/malate CoA ligase beta subunit family. In terms of assembly, heterotetramer of two alpha and two beta subunits. Mg(2+) is required as a cofactor.

The enzyme catalyses succinate + ATP + CoA = succinyl-CoA + ADP + phosphate. It carries out the reaction GTP + succinate + CoA = succinyl-CoA + GDP + phosphate. The protein operates within carbohydrate metabolism; tricarboxylic acid cycle; succinate from succinyl-CoA (ligase route): step 1/1. Functionally, succinyl-CoA synthetase functions in the citric acid cycle (TCA), coupling the hydrolysis of succinyl-CoA to the synthesis of either ATP or GTP and thus represents the only step of substrate-level phosphorylation in the TCA. The beta subunit provides nucleotide specificity of the enzyme and binds the substrate succinate, while the binding sites for coenzyme A and phosphate are found in the alpha subunit. This is Succinate--CoA ligase [ADP-forming] subunit beta from Bacillus cytotoxicus (strain DSM 22905 / CIP 110041 / 391-98 / NVH 391-98).